The following is a 151-amino-acid chain: Large ribosomal subunit protein eL8 (151 aa).

Belongs to the eukaryotic ribosomal protein eL8 family. Part of the 50S ribosomal subunit. Probably part of the RNase P complex.

It localises to the cytoplasm. Its function is as follows. Multifunctional RNA-binding protein that recognizes the K-turn motif in ribosomal RNA, the RNA component of RNase P, box H/ACA, box C/D and box C'/D' sRNAs. In Pyrobaculum neutrophilum (strain DSM 2338 / JCM 9278 / NBRC 100436 / V24Sta) (Thermoproteus neutrophilus), this protein is Large ribosomal subunit protein eL8.